Consider the following 480-residue polypeptide: ESX-1 secretion system ATPase EccB1 (480 aa).

Residues 44–64 (IALGIVVAVLILAGAALLAYF) traverse the membrane as a helical segment. The tract at residues 461 to 480 (DTLPADPSPRKVPAGASGAP) is disordered.

The protein belongs to the EccB family. In terms of assembly, part of the ESX-1 / type VII secretion system (T7SS), which is composed of cytosolic and membrane components. The ESX-1 membrane complex is composed of EccB1, EccCa1, EccCb1, EccD1 and EccE1.

The protein localises to the cell inner membrane. Its function is as follows. An ATPase. Part of the ESX-1 specialized secretion system, which delivers several virulence factors to host cells during infection, including the key virulence factors EsxA (ESAT-6) and EsxB (CFP-10). The chain is ESX-1 secretion system ATPase EccB1 from Mycobacterium tuberculosis (strain CDC 1551 / Oshkosh).